Reading from the N-terminus, the 376-residue chain is Chorismate synthase ARO2 (376 aa).

Ser2 is subject to N-acetylserine. His17 is a catalytic residue. A disordered region spans residues 39–61 (IQPQLTRRRPGQSKLSTPRDEKD). Residues His104 and Asp339 contribute to the active site.

This sequence belongs to the chorismate synthase family. As to quaternary structure, homotetramer.

The catalysed reaction is 5-O-(1-carboxyvinyl)-3-phosphoshikimate = chorismate + phosphate. It carries out the reaction FMNH2 + NADP(+) = FMN + NADPH + 2 H(+). It functions in the pathway metabolic intermediate biosynthesis; chorismate biosynthesis; chorismate from D-erythrose 4-phosphate and phosphoenolpyruvate: step 7/7. In terms of biological role, bifunctional chorismate synthase and flavin reductase that catalyzes the conversion of 5-enolpyruvylshikimate 3-phosphate (EPSP) to form chorismate, which is the last common intermediate in the synthesis of the three aromatic amino acids phenylalanine, tyrosine and tryptophan. Also acts as a flavin reductase (FR) able to generate reduced flavin mononucleotide in the presence of NADPH. The protein is Chorismate synthase ARO2 of Saccharomyces cerevisiae (strain ATCC 204508 / S288c) (Baker's yeast).